The chain runs to 204 residues: Holliday junction branch migration complex subunit RuvA (204 aa).

The segment at 1–64 (MIGKLKGTID…EDQLKLFGFM (64 aa)) is domain I. The domain II stretch occupies residues 65-143 (TALEREWFNL…AFAGEAINIA (79 aa)). Positions 144–151 (LKQELGEG) are flexible linker. Positions 152 to 204 (VAAAPVADAVSALTNLGYSRDQAANAVAAAMKTAGDDADSAKLIRLGLKELAR) are domain III.

The protein belongs to the RuvA family. As to quaternary structure, homotetramer. Forms an RuvA(8)-RuvB(12)-Holliday junction (HJ) complex. HJ DNA is sandwiched between 2 RuvA tetramers; dsDNA enters through RuvA and exits via RuvB. An RuvB hexamer assembles on each DNA strand where it exits the tetramer. Each RuvB hexamer is contacted by two RuvA subunits (via domain III) on 2 adjacent RuvB subunits; this complex drives branch migration. In the full resolvosome a probable DNA-RuvA(4)-RuvB(12)-RuvC(2) complex forms which resolves the HJ.

The protein resides in the cytoplasm. Its function is as follows. The RuvA-RuvB-RuvC complex processes Holliday junction (HJ) DNA during genetic recombination and DNA repair, while the RuvA-RuvB complex plays an important role in the rescue of blocked DNA replication forks via replication fork reversal (RFR). RuvA specifically binds to HJ cruciform DNA, conferring on it an open structure. The RuvB hexamer acts as an ATP-dependent pump, pulling dsDNA into and through the RuvAB complex. HJ branch migration allows RuvC to scan DNA until it finds its consensus sequence, where it cleaves and resolves the cruciform DNA. The chain is Holliday junction branch migration complex subunit RuvA from Rhizobium leguminosarum bv. trifolii (strain WSM2304).